Consider the following 283-residue polypeptide: Non-selective voltage-gated ion channel VDAC3 (283 aa).

C2 carries the N-acetylcysteine modification. Residue T4 is modified to Phosphothreonine. Residues K12, K15, and K20 each carry the N6-acetyllysine modification. The next 2 membrane-spanning stretches (beta stranded) occupy residues 26-35 (MVKIDLKTKS) and 39-47 (VEFSTSGHA). K53 is covalently cross-linked (Glycyl lysine isopeptide (Lys-Gly) (interchain with G-Cter in ubiquitin)). The next 3 beta stranded transmembrane spans lie at 54 to 64 (ASGNLETKYKV), 69 to 76 (LTFTQKWN), and 80 to 89 (TLGTEISWEN). K90 is subject to N6-acetyllysine. A beta stranded transmembrane segment spans residues 95 to 104 (LKLTLDTIFV). Glycyl lysine isopeptide (Lys-Gly) (interchain with G-Cter in ubiquitin) cross-links involve residues K109 and K110. 10 beta stranded membrane-spanning segments follow: residues 111–120 (SGKLKASYRR), 123–130 (FSLGSNVD), 137–145 (TIYGWAVLA), 150–158 (LAGYQMSFD), 163–175 (KLSQNNFALGYKA), 178–185 (FQLHTHVN), 189–198 (EFGGSIYQKV), 202–211 (IETSINLAWT), 218–227 (RFGIAAKYKL), and 231–238 (TSLSAKVN). S241 is subject to Phosphoserine. NAD(+)-binding positions include 242–244 (LIG) and 260–264 (SALID). Transmembrane regions (beta stranded) follow at residues 242-251 (LIGLGYTQTL) and 254-263 (GVKLTLSALI). K266 carries the post-translational modification N6-acetyllysine; alternate. A Glycyl lysine isopeptide (Lys-Gly) (interchain with G-Cter in ubiquitin); alternate cross-link involves residue K266. Residues 273 to 282 (HKVGLGFELE) form a beta stranded membrane-spanning segment.

It belongs to the eukaryotic mitochondrial porin family. As to quaternary structure, interacts with ARMC12 in a TBC1D21-dependent manner. Interacts with MISFA. In terms of processing, ubiquitinated by PRKN during mitophagy, leading to its degradation and enhancement of mitophagy. Deubiquitinated by USP30. As to expression, highest levels of expression detected in testis, less but still abundant expression in heart, kidney, brain, and skeletal muscle.

The protein resides in the mitochondrion outer membrane. Its subcellular location is the membrane. The enzyme catalyses chloride(in) = chloride(out). It catalyses the reaction K(+)(in) = K(+)(out). Non-selective voltage-gated ion channel that mediates the transport of anions and cations through the mitochondrion outer membrane and plasma membrane. Forms a high-conducting channel with a stable open state and a voltage-induced closure with a mild preference for anions over cations. Involved in male fertility and sperm mitochondrial sheath formation. The polypeptide is Non-selective voltage-gated ion channel VDAC3 (Mus musculus (Mouse)).